The following is a 271-amino-acid chain: Thiamine thiazole synthase (271 aa).

Residues Ser-39, 58–59 (ER), Gly-66, Val-130, and 158–160 (HVD) contribute to the NAD(+) site. Residues Asp-160 and His-175 each contribute to the Fe cation site. Met-225 is a binding site for NAD(+). Arg-235 provides a ligand contact to glycine.

The protein belongs to the THI4 family. As to quaternary structure, homooctamer; tetramer of dimers. It depends on Fe(2+) as a cofactor.

The catalysed reaction is hydrogen sulfide + glycine + NAD(+) = ADP-5-ethyl-4-methylthiazole-2-carboxylate + nicotinamide + 3 H2O + H(+). Its pathway is cofactor biosynthesis; thiamine diphosphate biosynthesis. Involved in the biosynthesis of the thiazole moiety of thiamine. Catalyzes the conversion of NAD and glycine to adenosine diphosphate 5-(2-hydroxyethyl)-4-methylthiazole-2-carboxylate (ADT), an adenylated thiazole intermediate, using free sulfide as a source of sulfur. This chain is Thiamine thiazole synthase, found in Metallosphaera sedula (strain ATCC 51363 / DSM 5348 / JCM 9185 / NBRC 15509 / TH2).